The primary structure comprises 303 residues: Glycine--tRNA ligase alpha subunit (303 aa).

It belongs to the class-II aminoacyl-tRNA synthetase family. Tetramer of two alpha and two beta subunits.

It localises to the cytoplasm. The catalysed reaction is tRNA(Gly) + glycine + ATP = glycyl-tRNA(Gly) + AMP + diphosphate. In Streptococcus equi subsp. equi (strain 4047), this protein is Glycine--tRNA ligase alpha subunit.